The chain runs to 189 residues: NAD(P)H-quinone oxidoreductase subunit 6, chloroplastic (189 aa).

A run of 5 helical transmembrane segments spans residues 10 to 30 (LSLLLLEIGTIIGALGVVLLP), 32 to 52 (ILYSGFLLGGVLICIAGIYLL), 61 to 81 (AQVLIYVGAINVIILFAIMLV), 98 to 118 (GLSSFICFSFFILLSNMIFDT), and 144 to 164 (LLPFEIVSVLLLVTLVGAVFI).

Belongs to the complex I subunit 6 family. In terms of assembly, NDH is composed of at least 16 different subunits, 5 of which are encoded in the nucleus.

Its subcellular location is the plastid. The protein resides in the chloroplast thylakoid membrane. The enzyme catalyses a plastoquinone + NADH + (n+1) H(+)(in) = a plastoquinol + NAD(+) + n H(+)(out). It carries out the reaction a plastoquinone + NADPH + (n+1) H(+)(in) = a plastoquinol + NADP(+) + n H(+)(out). NDH shuttles electrons from NAD(P)H:plastoquinone, via FMN and iron-sulfur (Fe-S) centers, to quinones in the photosynthetic chain and possibly in a chloroplast respiratory chain. The immediate electron acceptor for the enzyme in this species is believed to be plastoquinone. Couples the redox reaction to proton translocation, and thus conserves the redox energy in a proton gradient. The polypeptide is NAD(P)H-quinone oxidoreductase subunit 6, chloroplastic (ndhG) (Mesostigma viride (Green alga)).